Reading from the N-terminus, the 436-residue chain is Two-pore potassium channel 3 (436 aa).

The Cytoplasmic segment spans residues 1–148 (MANEGSDPLL…QKDPTETSRS (148 aa)). The segment at 62–117 (SHFIDSMKQPSPSSSSTAVNNPFSDSSTLDPLLPPPPPQPEPWLSDQTSSHCQGHA) is disordered. The span at 71–92 (PSPSSSSTAVNNPFSDSSTLDP) shows a compositional bias: low complexity. The span at 93 to 102 (LLPPPPPQPE) shows a compositional bias: pro residues. The chain crosses the membrane as a helical span at residues 149–169 (VVRQAFALLVVYLSLGVLIYW). An intramembrane region (pore-forming) is located at residues 185–204 (DGLYFCIVTMCTIGYGDITP). The helical transmembrane segment at 212–232 (FSIMFVLVGFGFIDILLSGMV) threads the bilayer. The Cytoplasmic portion of the chain corresponds to 233 to 274 (SYVLDLQESYMLDSAKRRDEPEKRRSYIIDVKKGRMRIRLKV). Residues 275–295 (ALALGVVVLCIAVGVGIMHFI) form a helical membrane-spanning segment. The pore-forming intramembrane region spans 302-321 (DSFYLSVMSVTTVGYGDRAF). Residues 328-348 (LFAAIWLLVSTLAVARAFLYL) form a helical membrane-spanning segment. Over 349–436 (AEARVDKRNR…LDLLEGGSGD (88 aa)) the chain is Cytoplasmic. EF-hand domains are found at residues 365 to 400 (LCETMSVSQFFAADIDNNGCVSKAEYVIYKLKEMEK) and 404 to 436 (KDILPISKQFDKLDRCSNGKITLLDLLEGGSGD). The Ca(2+) site is built by Asp378, Asp380, Asn382, Cys384, Glu389, Asp417, Asn421, Lys423, and Asp428.

The protein belongs to the two pore domain potassium channel (TC 1.A.1.7) family. In terms of assembly, homodimer. In terms of tissue distribution, expressed in roots, cotyledons, stems, hypocotyls, leaves and flowers. Detected in root tips and in mesophyll cells and guard cells of the leaves.

The protein resides in the vacuole membrane. It localises to the plastid. It is found in the chloroplast thylakoid membrane. Its activity is regulated as follows. Inhibited by barium, but not by tetraethylammonium. Its function is as follows. Two-pore potassium channel modulating the proton motive force (pmf) necessary to convert photochemical energy into physiological functions. Mediates the potassium efflux from the thylakoid lumen required for the regulation of the transmembrane electrical potential, the enhancement of the pH gradient for ATP synthesis, the regulation of electron flow, and pH-mediated photoprotective responses. Requires calcium for channel activity. The polypeptide is Two-pore potassium channel 3 (Arabidopsis thaliana (Mouse-ear cress)).